We begin with the raw amino-acid sequence, 375 residues long: Protein MGF 360-5L (375 aa).

This sequence belongs to the asfivirus MGF 360 family.

Its function is as follows. Plays a role in virus cell tropism, and may be required for efficient virus replication in macrophages. The protein is Protein MGF 360-5L of African swine fever virus (isolate Portugal/Lis 57/1957) (ASFV).